A 479-amino-acid chain; its full sequence is Sulfate adenylyltransferase subunit 1 (479 aa).

Residues 25–239 form the tr-type G domain; that stretch reads KSLLRFLTCG…EVLETVDIQR (215 aa). Residues 34–41 form a G1 region; that stretch reads GSVDDGKS. A GTP-binding site is contributed by 34 to 41; the sequence is GSVDDGKS. The tract at residues 92–96 is G2; it reads GITID. A G3 region spans residues 113–116; that stretch reads DTPG. Residues 113–117 and 168–171 each bind GTP; these read DTPGH and NKMD. Residues 168–171 are G4; sequence NKMD. The segment at 206–208 is G5; sequence SAL.

This sequence belongs to the TRAFAC class translation factor GTPase superfamily. Classic translation factor GTPase family. CysN/NodQ subfamily. In terms of assembly, heterodimer composed of CysD, the smaller subunit, and CysN.

The enzyme catalyses sulfate + ATP + H(+) = adenosine 5'-phosphosulfate + diphosphate. It functions in the pathway sulfur metabolism; hydrogen sulfide biosynthesis; sulfite from sulfate: step 1/3. Functionally, with CysD forms the ATP sulfurylase (ATPS) that catalyzes the adenylation of sulfate producing adenosine 5'-phosphosulfate (APS) and diphosphate, the first enzymatic step in sulfur assimilation pathway. APS synthesis involves the formation of a high-energy phosphoric-sulfuric acid anhydride bond driven by GTP hydrolysis by CysN coupled to ATP hydrolysis by CysD. The protein is Sulfate adenylyltransferase subunit 1 of Salmonella arizonae (strain ATCC BAA-731 / CDC346-86 / RSK2980).